The sequence spans 350 residues: Legumin K (350 aa).

2 disordered regions span residues L37–V86 and E102–G170. Composition is skewed to basic and acidic residues over residues D104–Q118, E141–E150, and E160–G170. Residues E182 to T329 enclose the Cupin type-1 domain.

This sequence belongs to the 11S seed storage protein (globulins) family. As to quaternary structure, hexamer; each subunit is composed of an acidic and a basic chain derived from a single precursor and linked by a disulfide bond.

Functionally, this protein found in the seeds of many leguminous and non-leguminous plants is the source of sulfur-containing amino acids in seed meals. The protein is Legumin K (LEGK) of Pisum sativum (Garden pea).